We begin with the raw amino-acid sequence, 876 residues long: MAP7 domain-containing protein 3 (876 aa).

3 disordered regions span residues 30 to 139, 162 to 200, and 402 to 438; these read AEER…KFKA, GGVM…VDNT, and TEAP…IDKR. The segment covering 39–54 has biased composition (polar residues); the sequence is INSSAGANKRSSSTPD. Positions 58–136 form a coiled coil; the sequence is LKNDVKQQLA…KQKQAEDTEK (79 aa). Basic and acidic residues-rich tracts occupy residues 60–139 and 169–196; these read NDVK…KFKA and KSGK…DMQH. Phosphoserine is present on residues serine 417 and serine 483. Coiled-coil stretches lie at residues 549–578 and 626–658; these read IQIR…IARK and SAMM…RRKA. 2 disordered regions span residues 558 to 683 and 742 to 783; these read QSKN…EIFP and IQGK…NPNH. Basic and acidic residues-rich tracts occupy residues 559 to 590 and 630 to 659; these read SKNE…DKVP and KSRD…RKAS. The span at 665–679 shows a compositional bias: acidic residues; sequence SEDEADDEGESEDSL. Positions 750–763 are enriched in basic residues; sequence SAKKPPTRPIRSRK. The segment covering 771 to 782 has biased composition (polar residues); it reads IRPTQSASSNPN.

The protein belongs to the MAP7 family. In terms of tissue distribution, high expression in lung, skeletal muscle, brain, and kidney, with much weaker expression in spleen, small intestine, liver, and heart.

The protein resides in the cytoplasm. It is found in the cytoskeleton. It localises to the spindle. Its function is as follows. Promotes the assembly and stability of microtubules. This chain is MAP7 domain-containing protein 3 (Map7d3), found in Mus musculus (Mouse).